The following is a 124-amino-acid chain: Small ribosomal subunit protein uS12 (124 aa).

At aspartate 89 the chain carries 3-methylthioaspartic acid. The tract at residues 102-124 (LDTSGVNNRKHGRSKYGTKRPKS) is disordered. Over residues 109-124 (NRKHGRSKYGTKRPKS) the composition is skewed to basic residues.

The protein belongs to the universal ribosomal protein uS12 family. As to quaternary structure, part of the 30S ribosomal subunit. Contacts proteins S8 and S17. May interact with IF1 in the 30S initiation complex.

With S4 and S5 plays an important role in translational accuracy. In terms of biological role, interacts with and stabilizes bases of the 16S rRNA that are involved in tRNA selection in the A site and with the mRNA backbone. Located at the interface of the 30S and 50S subunits, it traverses the body of the 30S subunit contacting proteins on the other side and probably holding the rRNA structure together. The combined cluster of proteins S8, S12 and S17 appears to hold together the shoulder and platform of the 30S subunit. In Francisella tularensis subsp. tularensis (strain FSC 198), this protein is Small ribosomal subunit protein uS12.